The chain runs to 209 residues: Molybdenum cofactor guanylyltransferase (209 aa).

GTP is bound by residues 13–15 (LAG), Lys-26, Asn-54, Asp-74, and Asp-104. Position 104 (Asp-104) interacts with Mg(2+).

This sequence belongs to the MobA family. Monomer. Mg(2+) serves as cofactor.

Its subcellular location is the cytoplasm. The enzyme catalyses Mo-molybdopterin + GTP + H(+) = Mo-molybdopterin guanine dinucleotide + diphosphate. Its function is as follows. Transfers a GMP moiety from GTP to Mo-molybdopterin (Mo-MPT) cofactor (Moco or molybdenum cofactor) to form Mo-molybdopterin guanine dinucleotide (Mo-MGD) cofactor. The protein is Molybdenum cofactor guanylyltransferase of Acinetobacter baumannii (strain ACICU).